The sequence spans 85 residues: Large ribosomal subunit protein bL27 (85 aa).

The interval 1–22 is disordered; the sequence is MAHKKAGGSSRNGRDSHSKRLG.

Belongs to the bacterial ribosomal protein bL27 family.

The protein is Large ribosomal subunit protein bL27 of Nitrosomonas europaea (strain ATCC 19718 / CIP 103999 / KCTC 2705 / NBRC 14298).